We begin with the raw amino-acid sequence, 138 residues long: NADH-quinone oxidoreductase subunit A 1 (138 aa).

3 helical membrane passes run 19–39, 74–94, and 103–123; these read FLPL…LLLA, FYLI…IFAW, and LAGL…LVWL.

It belongs to the complex I subunit 3 family. In terms of assembly, NDH-1 is composed of 14 different subunits. Subunits NuoA, H, J, K, L, M, N constitute the membrane sector of the complex.

The protein resides in the cell inner membrane. It catalyses the reaction a quinone + NADH + 5 H(+)(in) = a quinol + NAD(+) + 4 H(+)(out). In terms of biological role, NDH-1 shuttles electrons from NADH, via FMN and iron-sulfur (Fe-S) centers, to quinones in the respiratory chain. The immediate electron acceptor for the enzyme in this species is believed to be ubiquinone. Couples the redox reaction to proton translocation (for every two electrons transferred, four hydrogen ions are translocated across the cytoplasmic membrane), and thus conserves the redox energy in a proton gradient. The protein is NADH-quinone oxidoreductase subunit A 1 of Geobacter metallireducens (strain ATCC 53774 / DSM 7210 / GS-15).